Here is a 409-residue protein sequence, read N- to C-terminus: NADH-quinone oxidoreductase subunit D (409 aa).

Belongs to the complex I 49 kDa subunit family. As to quaternary structure, NDH-1 is composed of 14 different subunits. Subunits NuoB, C, D, E, F, and G constitute the peripheral sector of the complex.

Its subcellular location is the cell inner membrane. It carries out the reaction a quinone + NADH + 5 H(+)(in) = a quinol + NAD(+) + 4 H(+)(out). In terms of biological role, NDH-1 shuttles electrons from NADH, via FMN and iron-sulfur (Fe-S) centers, to quinones in the respiratory chain. The immediate electron acceptor for the enzyme in this species is believed to be ubiquinone. Couples the redox reaction to proton translocation (for every two electrons transferred, four hydrogen ions are translocated across the cytoplasmic membrane), and thus conserves the redox energy in a proton gradient. This is NADH-quinone oxidoreductase subunit D from Helicobacter pylori (strain HPAG1).